The primary structure comprises 264 residues: Phosphonoacetaldehyde hydrolase (264 aa).

The Nucleophile role is filled by Asp-9. Asp-9 and Ala-11 together coordinate Mg(2+). Lys-50 (schiff-base intermediate with substrate) is an active-site residue. Asp-183 is a Mg(2+) binding site.

Belongs to the HAD-like hydrolase superfamily. PhnX family. Homodimer. The cofactor is Mg(2+).

The enzyme catalyses phosphonoacetaldehyde + H2O = acetaldehyde + phosphate + H(+). Functionally, involved in phosphonate degradation. The protein is Phosphonoacetaldehyde hydrolase of Bacillus cereus (strain ZK / E33L).